The sequence spans 238 residues: Keratin-associated protein 5-3 (238 aa).

11 repeat units span residues 35–38 (CCVP), 41–44 (CCKP), 47–50 (CCVP), 91–94 (CCVP), 150–153 (CCKP), 160–163 (CCKP), 170–173 (CCKP), 189–192 (CCKP), 199–202 (CCKP), 218–221 (CCKP), and 228–231 (CCVP). The segment at 35 to 231 (CCVPVCCCKP…CSSQSSCCVP (197 aa)) is 11 X 4 AA repeats of C-C-X-P.

Belongs to the KRTAP type 5 family. As to quaternary structure, interacts with hair keratins. Restricted to hair root, not detected in any other tissues.

In the hair cortex, hair keratin intermediate filaments are embedded in an interfilamentous matrix, consisting of hair keratin-associated protein (KRTAP), which are essential for the formation of a rigid and resistant hair shaft through their extensive disulfide bond cross-linking with abundant cysteine residues of hair keratins. The matrix proteins include the high-sulfur and high-glycine-tyrosine keratins. In Homo sapiens (Human), this protein is Keratin-associated protein 5-3 (KRTAP5-3).